Reading from the N-terminus, the 75-residue chain is DNA-directed RNA polymerase subunit omega (75 aa).

Belongs to the RNA polymerase subunit omega family. The RNAP catalytic core consists of 2 alpha, 1 beta, 1 beta' and 1 omega subunit. When a sigma factor is associated with the core the holoenzyme is formed, which can initiate transcription.

The enzyme catalyses RNA(n) + a ribonucleoside 5'-triphosphate = RNA(n+1) + diphosphate. Promotes RNA polymerase assembly. Latches the N- and C-terminal regions of the beta' subunit thereby facilitating its interaction with the beta and alpha subunits. The protein is DNA-directed RNA polymerase subunit omega of Thermosipho melanesiensis (strain DSM 12029 / CIP 104789 / BI429).